The following is a 423-amino-acid chain: GTPase Obg (423 aa).

Positions 1–158 constitute an Obg domain; sequence MFIDTARIYI…MWVRLELKLL (158 aa). The 171-residue stretch at 159–329 folds into the OBG-type G domain; the sequence is ADVGLIGFPN…LLDKTIEILS (171 aa). Residues 165-172, 190-194, 211-214, 281-284, and 310-312 each bind GTP; these read GFPNAGKS, FTTLT, DIPG, NKID, and SAL. Residues S172 and T192 each coordinate Mg(2+). The OCT domain occupies 346 to 423; sequence TPPEEEETLN…VRDFEFEYYE (78 aa).

The protein belongs to the TRAFAC class OBG-HflX-like GTPase superfamily. OBG GTPase family. In terms of assembly, monomer. Requires Mg(2+) as cofactor.

Its subcellular location is the cytoplasm. In terms of biological role, an essential GTPase which binds GTP, GDP and possibly (p)ppGpp with moderate affinity, with high nucleotide exchange rates and a fairly low GTP hydrolysis rate. Plays a role in control of the cell cycle, stress response, ribosome biogenesis and in those bacteria that undergo differentiation, in morphogenesis control. This chain is GTPase Obg, found in Thermoanaerobacter pseudethanolicus (strain ATCC 33223 / 39E) (Clostridium thermohydrosulfuricum).